A 337-amino-acid chain; its full sequence is GTPase Obg (337 aa).

One can recognise an Obg domain in the interval 1 to 158 (MFIDEVRILV…KRLRLELKLL (158 aa)). 2 stretches are compositionally biased toward basic and acidic residues: residues 61-74 (NPEH…HGEG) and 137-146 (PTEHEPGRPG). 2 disordered regions span residues 61 to 83 (NPEH…AEGR) and 119 to 146 (GGRG…GRPG). An OBG-type G domain is found at 159–330 (ADVGLVGFPN…LKHAMADRVL (172 aa)). GTP is bound by residues 165 to 172 (GFPNAGKS), 190 to 194 (FTTLE), 212 to 215 (DIPG), 282 to 285 (TKMD), and 311 to 313 (SSA). Positions 172 and 192 each coordinate Mg(2+).

Belongs to the TRAFAC class OBG-HflX-like GTPase superfamily. OBG GTPase family. As to quaternary structure, monomer. Mg(2+) serves as cofactor.

It localises to the cytoplasm. In terms of biological role, an essential GTPase which binds GTP, GDP and possibly (p)ppGpp with moderate affinity, with high nucleotide exchange rates and a fairly low GTP hydrolysis rate. Plays a role in control of the cell cycle, stress response, ribosome biogenesis and in those bacteria that undergo differentiation, in morphogenesis control. This chain is GTPase Obg, found in Solibacter usitatus (strain Ellin6076).